Reading from the N-terminus, the 393-residue chain is Acetylornithine aminotransferase (393 aa).

Pyridoxal 5'-phosphate-binding positions include glycine 95–alanine 96 and phenylalanine 127. Arginine 130 lines the N(2)-acetyl-L-ornithine pocket. Pyridoxal 5'-phosphate is bound at residue aspartate 214–glutamine 217. N6-(pyridoxal phosphate)lysine is present on lysine 243. Serine 271 contributes to the N(2)-acetyl-L-ornithine binding site. Threonine 272 lines the pyridoxal 5'-phosphate pocket.

Belongs to the class-III pyridoxal-phosphate-dependent aminotransferase family. ArgD subfamily. Homodimer. The cofactor is pyridoxal 5'-phosphate.

It is found in the cytoplasm. The enzyme catalyses N(2)-acetyl-L-ornithine + 2-oxoglutarate = N-acetyl-L-glutamate 5-semialdehyde + L-glutamate. It participates in amino-acid biosynthesis; L-arginine biosynthesis; N(2)-acetyl-L-ornithine from L-glutamate: step 4/4. The sequence is that of Acetylornithine aminotransferase from Nitrosomonas europaea (strain ATCC 19718 / CIP 103999 / KCTC 2705 / NBRC 14298).